Consider the following 457-residue polypeptide: Fibrinogen C domain-containing protein 1 (457 aa).

The interval 1-20 (MGSDRWKNIGGAPQMEDSVQ) is disordered. Over 1 to 33 (MGSDRWKNIGGAPQMEDSVQDKSQRKGCGYILC) the chain is Cytoplasmic. Residues 34–54 (TVLLSVAVLLAVTVTGAVLFM) form a helical; Signal-anchor for type II membrane protein membrane-spanning segment. At 55–457 (NHYHAPSTEP…MKIRPQREEN (403 aa)) the chain is on the extracellular side. Residues 211–235 (RPRVKADLQRAPSRSSRPRGCANGS) are disordered. The 224-residue stretch at 231–454 (CANGSKPRDC…FTEMKIRPQR (224 aa)) folds into the Fibrinogen C-terminal domain. N-linked (GlcNAc...) asparagine glycosylation is present at N233. C240 and C269 are joined by a disulfide. N336 is a glycosylation site (N-linked (GlcNAc...) asparagine). The Ca(2+) site is built by D389 and D391. Cysteines 397 and 410 form a disulfide.

In terms of assembly, homotetramer; disulfide-linked.

It is found in the membrane. Acetyl group-binding receptor which shows a calcium-dependent binding to acetylated structures such as chitin, some N-acetylated carbohydrates, and amino acids. This chain is Fibrinogen C domain-containing protein 1 (fibcd1), found in Xenopus tropicalis (Western clawed frog).